The sequence spans 463 residues: Glycine--tRNA ligase (463 aa).

Residues R98 and E174 each coordinate substrate. Residues 206–208, 216–221, 290–291, and 334–337 each bind ATP; these read RNE, FRTREF, EL, and GADR. 221–225 contacts substrate; it reads FEQME. A substrate-binding site is contributed by 330–334; it reads EPSLG.

The protein belongs to the class-II aminoacyl-tRNA synthetase family. In terms of assembly, homodimer.

The protein localises to the cytoplasm. It carries out the reaction tRNA(Gly) + glycine + ATP = glycyl-tRNA(Gly) + AMP + diphosphate. Its function is as follows. Catalyzes the attachment of glycine to tRNA(Gly). The polypeptide is Glycine--tRNA ligase (Staphylococcus aureus (strain Mu50 / ATCC 700699)).